We begin with the raw amino-acid sequence, 732 residues long: Translation initiation factor eIF2B subunit epsilon (732 aa).

In terms of domain architecture, W2 spans 559–726; the sequence is GEEEEDFGVE…QEADEEDSDE (168 aa).

It belongs to the eIF-2B gamma/epsilon subunits family. In terms of assembly, component of the translation initiation factor 2B (eIF2B) complex which is a heterodecamer of two sets of five different subunits: alpha, beta, gamma, delta and epsilon. Subunits alpha, beta and delta comprise a regulatory subcomplex and subunits epsilon and gamma comprise a catalytic subcomplex. Within the complex, the hexameric regulatory complex resides at the center, with the two heterodimeric catalytic subcomplexes bound on opposite sides.

It localises to the cytoplasm. It is found in the cytosol. Functionally, acts as a component of the translation initiation factor 2B (eIF2B) complex, which catalyzes the exchange of GDP for GTP on the eukaryotic initiation factor 2 (eIF2) complex gamma subunit. Its guanine nucleotide exchange factor activity is repressed when bound to eIF2 complex phosphorylated on the alpha subunit, thereby limiting the amount of methionyl-initiator methionine tRNA available to the ribosome and consequently global translation is repressed. The protein is Translation initiation factor eIF2B subunit epsilon (GCD6) of Candida albicans (strain SC5314 / ATCC MYA-2876) (Yeast).